Consider the following 129-residue polypeptide: Cytochrome c-type protein SHP (129 aa).

The first 17 residues, methionine 1–alanine 17, serve as a signal peptide directing secretion. Heme c contacts are provided by cysteine 60, cysteine 63, and histidine 64. Cysteine 106 and cysteine 114 form a disulfide bridge.

Post-translationally, binds 1 heme c group covalently per subunit.

High-spin cytochrome. Transiently bind oxygen during autoxidation, which occurs with a half-life of 3 minutes with a 4-fold excess of O(2). Also binds carbon monoxide, azide and cyanide. The chain is Cytochrome c-type protein SHP (shp) from Cereibacter sphaeroides (strain ATCC 17023 / DSM 158 / JCM 6121 / CCUG 31486 / LMG 2827 / NBRC 12203 / NCIMB 8253 / ATH 2.4.1.) (Rhodobacter sphaeroides).